Consider the following 390-residue polypeptide: Succinate--CoA ligase [ADP-forming] subunit beta (390 aa).

The 236-residue stretch at 9–244 (KEIFREYGVP…LSEEDPVEVE (236 aa)) folds into the ATP-grasp domain. ATP-binding positions include Lys46, 53 to 55 (GRG), Glu99, Ala102, and Glu107. Positions 199 and 213 each coordinate Mg(2+). Substrate is bound by residues Asn264 and 321–323 (GIV).

This sequence belongs to the succinate/malate CoA ligase beta subunit family. Heterotetramer of two alpha and two beta subunits. The cofactor is Mg(2+).

The enzyme catalyses succinate + ATP + CoA = succinyl-CoA + ADP + phosphate. It catalyses the reaction GTP + succinate + CoA = succinyl-CoA + GDP + phosphate. The protein operates within carbohydrate metabolism; tricarboxylic acid cycle; succinate from succinyl-CoA (ligase route): step 1/1. Succinyl-CoA synthetase functions in the citric acid cycle (TCA), coupling the hydrolysis of succinyl-CoA to the synthesis of either ATP or GTP and thus represents the only step of substrate-level phosphorylation in the TCA. The beta subunit provides nucleotide specificity of the enzyme and binds the substrate succinate, while the binding sites for coenzyme A and phosphate are found in the alpha subunit. The sequence is that of Succinate--CoA ligase [ADP-forming] subunit beta from Nitratiruptor sp. (strain SB155-2).